A 196-amino-acid polypeptide reads, in one-letter code: Charged multivesicular body protein 1a (196 aa).

Residues 5 to 41 adopt a coiled-coil conformation; it reads LFQLKFTAKQLEKLAKKAEKDSNTEQAKVKKALQQKN. Over residues 170–181 the composition is skewed to polar residues; that stretch reads QGASSVGESSTR. The segment at 170–196 is disordered; that stretch reads QGASSVGESSTRTQEDQLSRRLASLRN. The short motif at 185 to 195 is the MIT-interacting motif element; the sequence is DQLSRRLASLR.

The protein belongs to the SNF7 family. As to quaternary structure, probable peripherally associated component of the endosomal sorting required for transport complex III (ESCRT-III).

It is found in the cytoplasm. The protein localises to the endosome membrane. Its function is as follows. Probable peripherally associated component of the endosomal sorting required for transport complex III (ESCRT-III) which is involved in multivesicular bodies (MVBs) formation and sorting of endosomal cargo proteins into MVBs. MVBs contain intraluminal vesicles (ILVs) that are generated by invagination and scission from the limiting membrane of the endosome and mostly are delivered to lysosomes enabling degradation of membrane proteins, such as stimulated growth factor receptors, lysosomal enzymes and lipids. This chain is Charged multivesicular body protein 1a (chmp1a), found in Xenopus laevis (African clawed frog).